We begin with the raw amino-acid sequence, 179 residues long: Segregation and condensation protein B (179 aa).

Belongs to the ScpB family. In terms of assembly, homodimer. Homodimerization may be required to stabilize the binding of ScpA to the Smc head domains. Component of a cohesin-like complex composed of ScpA, ScpB and the Smc homodimer, in which ScpA and ScpB bind to the head domain of Smc. The presence of the three proteins is required for the association of the complex with DNA.

It is found in the cytoplasm. In terms of biological role, participates in chromosomal partition during cell division. May act via the formation of a condensin-like complex containing Smc and ScpA that pull DNA away from mid-cell into both cell halves. This is Segregation and condensation protein B from Staphylococcus haemolyticus (strain JCSC1435).